Reading from the N-terminus, the 311-residue chain is Linearmycin resistance ATP-binding protein LnrL (311 aa).

In terms of domain architecture, ABC transporter spans 2-232; it reads LQAENIKKAY…LGGDTIIQLT (231 aa). 34-41 provides a ligand contact to ATP; sequence GPNGAGKS.

It belongs to the ABC transporter superfamily. The complex is composed of two ATP-binding proteins (LnrL) and two transmembrane proteins (LnrM and LnrN).

Its function is as follows. Required for resistance to linearmycins, a family of antibiotic-specialized metabolites produced by some streptomycetes. Part of the ABC transporter complex LnrLMN that probably facilitates linearmycin removal from the membrane. Responsible for energy coupling to the transport system. Also mediates KinC-dependent biofilm morphology. In Bacillus subtilis (strain 168), this protein is Linearmycin resistance ATP-binding protein LnrL.